The primary structure comprises 149 residues: MNVFLSKYVNGVDKKSRVSVPANYRAVLGKELFNGVIAYPSIRNDCIEVCGISHIEKLRQMIETLDPYSEERDAFETMIFGEAVQLSFDGEGRVILPQSLMKHAGIEEQACFVGKGVIFEIWQPQNFEKYLNSAQKIAHEKRLTLRNAN.

SpoVT-AbrB domains are found at residues 7–54 (KYVN…GISH) and 83–126 (AVQL…QPQN).

The protein belongs to the MraZ family. As to quaternary structure, forms oligomers.

It is found in the cytoplasm. Its subcellular location is the nucleoid. The protein is Transcriptional regulator MraZ of Rickettsia felis (strain ATCC VR-1525 / URRWXCal2) (Rickettsia azadi).